A 105-amino-acid polypeptide reads, in one-letter code: Guanidinium exporter (105 aa).

Residues 1 to 21 traverse the membrane as a helical segment; the sequence is MSWIILLIAGLLEVVWAVGLK. The Cytoplasmic portion of the chain corresponds to 22 to 28; sequence YTHGFSR. Residues 29 to 49 traverse the membrane as a helical segment; it reads LTPSIITITAMVISMALLSWA. The Periplasmic segment spans residues 50–57; the sequence is MKTLPVGT. A helical membrane pass occupies residues 58–78; that stretch reads AYAIWTGIGAVGAAITGILLL. At 79-81 the chain is on the cytoplasmic side; it reads GES. A helical membrane pass occupies residues 82–102; the sequence is ASPARLLSLGLIVAGIIGLKL. At 103–105 the chain is on the periplasmic side; it reads SAH.

It belongs to the drug/metabolite transporter (DMT) superfamily. Small multidrug resistance (SMR) (TC 2.A.7.1) family. Gdx/SugE subfamily.

It localises to the cell inner membrane. In terms of biological role, guanidinium ion exporter. Couples guanidinium export to the proton motive force, exchanging one guanidinium ion for two protons. This is Guanidinium exporter from Salmonella typhi.